The following is a 380-amino-acid chain: 1-deoxy-D-xylulose 5-phosphate reductoisomerase (380 aa).

NADPH is bound by residues Thr10, Gly11, Ser12, Ile13, Gly36, Arg37, Asn38, and Asn120. Lys121 serves as a coordination point for 1-deoxy-D-xylulose 5-phosphate. Glu122 is an NADPH binding site. Asp146 contacts Mn(2+). Positions 147, 148, 172, and 195 each coordinate 1-deoxy-D-xylulose 5-phosphate. Glu148 contributes to the Mn(2+) binding site. Gly201 is an NADPH binding site. Ser208, Asn213, Lys214, and Glu217 together coordinate 1-deoxy-D-xylulose 5-phosphate. Glu217 lines the Mn(2+) pocket.

This sequence belongs to the DXR family. Mg(2+) is required as a cofactor. Requires Mn(2+) as cofactor.

The catalysed reaction is 2-C-methyl-D-erythritol 4-phosphate + NADP(+) = 1-deoxy-D-xylulose 5-phosphate + NADPH + H(+). The protein operates within isoprenoid biosynthesis; isopentenyl diphosphate biosynthesis via DXP pathway; isopentenyl diphosphate from 1-deoxy-D-xylulose 5-phosphate: step 1/6. In terms of biological role, catalyzes the NADPH-dependent rearrangement and reduction of 1-deoxy-D-xylulose-5-phosphate (DXP) to 2-C-methyl-D-erythritol 4-phosphate (MEP). The chain is 1-deoxy-D-xylulose 5-phosphate reductoisomerase from Listeria monocytogenes serotype 4b (strain F2365).